We begin with the raw amino-acid sequence, 105 residues long: Pyrimidine/purine nucleoside phosphorylase (105 aa).

This sequence belongs to the nucleoside phosphorylase PpnP family.

The enzyme catalyses a purine D-ribonucleoside + phosphate = a purine nucleobase + alpha-D-ribose 1-phosphate. It carries out the reaction adenosine + phosphate = alpha-D-ribose 1-phosphate + adenine. It catalyses the reaction cytidine + phosphate = cytosine + alpha-D-ribose 1-phosphate. The catalysed reaction is guanosine + phosphate = alpha-D-ribose 1-phosphate + guanine. The enzyme catalyses inosine + phosphate = alpha-D-ribose 1-phosphate + hypoxanthine. It carries out the reaction thymidine + phosphate = 2-deoxy-alpha-D-ribose 1-phosphate + thymine. It catalyses the reaction uridine + phosphate = alpha-D-ribose 1-phosphate + uracil. The catalysed reaction is xanthosine + phosphate = alpha-D-ribose 1-phosphate + xanthine. Functionally, catalyzes the phosphorolysis of diverse nucleosides, yielding D-ribose 1-phosphate and the respective free bases. Can use uridine, adenosine, guanosine, cytidine, thymidine, inosine and xanthosine as substrates. Also catalyzes the reverse reactions. The chain is Pyrimidine/purine nucleoside phosphorylase from Delftia acidovorans (strain DSM 14801 / SPH-1).